A 393-amino-acid chain; its full sequence is MLKRTTKIAFLSSFVALSAFSVSAEDMQFGVTPPQITAQTYVLMDYNSGAILTALNPDQRQYPASLTKMMTSYVVGVALKQGKIHNTDMVTIGESAWGRNFPDSSKMFLDLNTQVSVADLNRGVIVVSGNDATVALAEHISGNVPNFVETMNKYVQQFGLKNTNFTTPHGLDDPNQYSSARDMAIIGAHIIRDLPEEYKIYSEKNFTFNKIKQANRNGLLWDKTINVDGMKTGHTSQAGYNLVASATTSNNMRLISVVMGVPTYKGREVESKKLLQWGFANFETFKTLEAGKEISEQRVYYGDKNSVKLGALMDHFITIPKGKQSEVKARYELADKNLQAPLVKGQVIGKVVYQLDGKDIASANLQVMNDVGEAGIFGKLWDWLVLTVKGLFS.

Residues 1-18 (MLKRTTKIAFLSSFVALS) form the signal peptide. Ser-65 functions as the Acyl-ester intermediate in the catalytic mechanism. Residue Lys-68 is the Proton acceptor of the active site. Ser-128 is an active-site residue. Lys-231 lines the substrate pocket.

The protein belongs to the peptidase S11 family.

The protein resides in the cell inner membrane. The catalysed reaction is Preferential cleavage: (Ac)2-L-Lys-D-Ala-|-D-Ala. Also transpeptidation of peptidyl-alanyl moieties that are N-acyl substituents of D-alanine.. It functions in the pathway cell wall biogenesis; peptidoglycan biosynthesis. Its function is as follows. Removes C-terminal D-alanyl residues from sugar-peptide cell wall precursors. This is D-alanyl-D-alanine carboxypeptidase DacA (dacA) from Haemophilus influenzae (strain ATCC 51907 / DSM 11121 / KW20 / Rd).